A 188-amino-acid chain; its full sequence is Peptidyl-tRNA hydrolase (188 aa).

F14 is a tRNA binding site. The active-site Proton acceptor is the H19. 3 residues coordinate tRNA: Y64, N66, and N112.

Belongs to the PTH family. As to quaternary structure, monomer.

Its subcellular location is the cytoplasm. It carries out the reaction an N-acyl-L-alpha-aminoacyl-tRNA + H2O = an N-acyl-L-amino acid + a tRNA + H(+). Functionally, hydrolyzes ribosome-free peptidyl-tRNAs (with 1 or more amino acids incorporated), which drop off the ribosome during protein synthesis, or as a result of ribosome stalling. Catalyzes the release of premature peptidyl moieties from peptidyl-tRNA molecules trapped in stalled 50S ribosomal subunits, and thus maintains levels of free tRNAs and 50S ribosomes. In Onion yellows phytoplasma (strain OY-M), this protein is Peptidyl-tRNA hydrolase.